We begin with the raw amino-acid sequence, 512 residues long: Mesoderm induction early response protein 1 (512 aa).

Residues 1-16 (MAEPSVESSSPGGSAT) show a composition bias toward low complexity. 2 disordered regions span residues 1–63 (MAEP…REGD) and 75–173 (YGST…EDYI). Position 10 is a phosphoserine (Ser-10). The segment covering 17–36 (SDDHEFDPSADMLVHDFDDE) has biased composition (basic and acidic residues). 2 stretches are compositionally biased toward acidic residues: residues 37 to 46 (RTLEEEEMME) and 83 to 105 (EEDEEEEEEEEEGEDDEDADNDD). Residues 129–144 (QSSNDDPSQSVASQDA) are compositionally biased toward polar residues. Phosphoserine is present on Ser-141. Tyr-155 carries the phosphotyrosine modification. 2 positions are modified to phosphoserine: Ser-160 and Ser-166. Acidic residues predominate over residues 160-173 (SEVEEESEEDEDYI). The 99-residue stretch at 180-278 (KEIMVGSMFQ…EALRRLRFNV (99 aa)) folds into the ELM2 domain. An interaction with HDAC1 region spans residues 180-284 (KEIMVGSMFQ…RFNVKAAREE (105 aa)). A Glycyl lysine isopeptide (Lys-Gly) (interchain with G-Cter in SUMO2) cross-link involves residue Lys-239. The region spanning 283 to 335 (EELSVWTEEECRNFEQGLKAYGKDFHLIQANKVRTRSVGECVAFYYMWKKSER) is the SANT domain. Residues 366 to 512 (ESESAASSRA…KFEELENTDD (147 aa)) are disordered. 3 positions are modified to phosphoserine: Ser-367, Ser-369, and Ser-377. Residues 396–409 (TVSTANQNGVSSNG) are compositionally biased toward polar residues. Positions 414-423 (LNKEEVKVEG) are enriched in basic and acidic residues. Lys-420 is covalently cross-linked (Glycyl lysine isopeptide (Lys-Gly) (interchain with G-Cter in SUMO2)). Residue Thr-448 is modified to Phosphothreonine. Over residues 462 to 475 (ARNENDFDEKSERP) the composition is skewed to basic and acidic residues. Residues 482–494 (NSNGKESPGSSEF) show a composition bias toward polar residues. Phosphoserine is present on residues Ser-483, Ser-488, and Ser-491.

In terms of assembly, interacts with HDAC1. Part of a complex containing at least CDYL, MIER1, MIER2, HDAC1 and HDAC2. Ubiquitously expressed, but at very low levels. However, consistent level of expression are observed in heart, testis, thyroid, ovary and adrenal gland. Transcripts are up-regulated in breast carcinoma cell lines and tumor.

The protein localises to the nucleus. The protein resides in the cytoplasm. Transcriptional repressor regulating the expression of a number of genes including SP1 target genes. Probably functions through recruitment of HDAC1 a histone deacetylase involved in chromatin silencing. The polypeptide is Mesoderm induction early response protein 1 (MIER1) (Homo sapiens (Human)).